We begin with the raw amino-acid sequence, 232 residues long: Orotate phosphoribosyltransferase (232 aa).

5-phospho-alpha-D-ribose 1-diphosphate contacts are provided by residues Arg-107, Lys-108, Lys-111, His-113, and 133–141 (EDLTTAGGS). Residue Thr-137 participates in orotate binding.

Belongs to the purine/pyrimidine phosphoribosyltransferase family. PyrE subfamily. As to quaternary structure, homodimer. The cofactor is Mg(2+).

It carries out the reaction orotidine 5'-phosphate + diphosphate = orotate + 5-phospho-alpha-D-ribose 1-diphosphate. Its pathway is pyrimidine metabolism; UMP biosynthesis via de novo pathway; UMP from orotate: step 1/2. Functionally, catalyzes the transfer of a ribosyl phosphate group from 5-phosphoribose 1-diphosphate to orotate, leading to the formation of orotidine monophosphate (OMP). This chain is Orotate phosphoribosyltransferase, found in Rhizobium rhizogenes (strain K84 / ATCC BAA-868) (Agrobacterium radiobacter).